Here is a 414-residue protein sequence, read N- to C-terminus: Secernin-1 (414 aa).

It belongs to the peptidase C69 family. Secernin subfamily.

The protein localises to the cytoplasm. In terms of biological role, regulates exocytosis in mast cells. Increases both the extent of secretion and the sensitivity of mast cells to stimulation with calcium. In Rattus norvegicus (Rat), this protein is Secernin-1 (Scrn1).